Reading from the N-terminus, the 814-residue chain is Origin of replication complex subunit 1 (814 aa).

Over residues 1-15 (MDLSATPSRSKSGLR) the composition is skewed to polar residues. The tract at residues 1-127 (MDLSATPSRS…PKKPKKRAYY (127 aa)) is disordered. Low complexity-rich tracts occupy residues 51–62 (APMSPVTPSSVR) and 69–80 (ETPTKVTSETPV). The short motif at 105 to 112 (PKRQRQRQ) is the Nuclear localization signal element. A compositionally biased stretch (basic residues) spans 108–127 (QRQRQRQRQQPKKPKKRAYY). Positions 157 to 181 (DPEAEECRVCFRAGAAVMVECDVCL) are histone H3 binding. The PHD-type zinc-finger motif lies at 160–209 (AEECRVCFRAGAAVMVECDVCLGGFHLRCVRPPLRRVPEGDWACPYCEAE). Residues cysteine 163, cysteine 166, cysteine 177, cysteine 180, histidine 185, and cysteine 188 each coordinate Zn(2+). Residues 197-201 (PEGDW) form a histone H3 binding region. Zn(2+)-binding residues include cysteine 203 and cysteine 206. Residues 218–335 (PKPPEGKRIV…IHWHNFKRLA (118 aa)) enclose the BAH domain. Residues 310–315 (ASDQGD) form a histone H3 binding region. 2 stretches are compositionally biased toward acidic residues: residues 339–349 (DEPETKEDPGD) and 360–373 (SDSDEDSEYDEEEE). The interval 339-384 (DEPETKEDPGDEPYNAGNDYVSDSDEDSEYDEEEEPTKCSSARTHQ) is disordered. The segment at 433-804 (PKSLPCRDKE…DDVTFALKES (372 aa)) is necessary and sufficient for ORC complex assembly. ATP-binding positions include 468-475 (GVPGTGKT) and 468-476 (GVPGTGKTM). Residues aspartate 558 and glutamate 559 each contribute to the Mg(2+) site. ATP-binding residues include glutamate 559, asparagine 592, and arginine 657.

It belongs to the ORC1 family. In terms of assembly, component of the origin recognition complex (ORC) composed of at least ORC1, ORC2, ORC3, ORC4, ORC5 and ORC6. ORC is regulated in a cell-cycle and development dependent manner. It is sequentially assembled at the exit from anaphase of mitosis and disassembled as cells enter S phase. Binds unmodified and methylated histone H3. Expressed strongly in root tips and shoot apical meristem (SAM), and weakly in young leaves. Not detected in mature leaves.

The protein localises to the nucleus. Functionally, essential protein. Component of the origin recognition complex (ORC) that binds origins of replication. It has a role in both chromosomal replication and mating type transcriptional silencing. Binds to the ARS consensus sequence (ACS) of origins of replication. H3K4me3 effector that positively regulates the transcription of a subset of genes. Required for cell proliferation. This is Origin of replication complex subunit 1 from Oryza sativa subsp. japonica (Rice).